Reading from the N-terminus, the 37-residue chain is U4-theraphotoxin-Hhn1v (37 aa).

Intrachain disulfides connect Cys-3-Cys-17, Cys-7-Cys-28, and Cys-22-Cys-33.

The protein belongs to the neurotoxin 12 (Hwtx-2) family. 02 (Hwtx-2) subfamily. Expressed by the venom gland.

Its subcellular location is the secreted. In terms of biological role, postsynaptic neurotoxin. The polypeptide is U4-theraphotoxin-Hhn1v (Cyriopagopus hainanus (Chinese bird spider)).